The primary structure comprises 168 residues: SsrA-binding protein (168 aa).

The disordered stretch occupies residues 1–20; the sequence is MAAQSKQAKPSGKQGGKKII.

It belongs to the SmpB family.

It is found in the cytoplasm. In terms of biological role, required for rescue of stalled ribosomes mediated by trans-translation. Binds to transfer-messenger RNA (tmRNA), required for stable association of tmRNA with ribosomes. tmRNA and SmpB together mimic tRNA shape, replacing the anticodon stem-loop with SmpB. tmRNA is encoded by the ssrA gene; the 2 termini fold to resemble tRNA(Ala) and it encodes a 'tag peptide', a short internal open reading frame. During trans-translation Ala-aminoacylated tmRNA acts like a tRNA, entering the A-site of stalled ribosomes, displacing the stalled mRNA. The ribosome then switches to translate the ORF on the tmRNA; the nascent peptide is terminated with the 'tag peptide' encoded by the tmRNA and targeted for degradation. The ribosome is freed to recommence translation, which seems to be the essential function of trans-translation. In Mycobacterium ulcerans (strain Agy99), this protein is SsrA-binding protein.